Reading from the N-terminus, the 257-residue chain is MQKVTIQEAEHLLQEIMSEEDDRFQILIKDERKGVQKLISKWYKQKELAQKEKEKFLEMSKYENALREKGLTYIAGIDEVGRGPLAGPVVTAAVVLPEDFYIPGLNDSKKLSEAKRERFYDEIKAQAIAIGVGIVSPQVIDEINIYQATKQAMLDAVANLSCTPQYLLIDAMKLPTPIPQTSIIKGDAKSISISAASIIAKVTRDRMMKELGEKYPAYGFEQHMGYGTKQHLEAIEAHGILEEHRKSFAPIKDMIQK.

The region spanning 72–257 (TYIAGIDEVG…FAPIKDMIQK (186 aa)) is the RNase H type-2 domain. Residues Asp-78, Glu-79, and Asp-170 each contribute to the a divalent metal cation site.

It belongs to the RNase HII family. Mn(2+) is required as a cofactor. The cofactor is Mg(2+).

Its subcellular location is the cytoplasm. It carries out the reaction Endonucleolytic cleavage to 5'-phosphomonoester.. Endonuclease that specifically degrades the RNA of RNA-DNA hybrids. The polypeptide is Ribonuclease HII (Bacillus cereus (strain ATCC 10987 / NRS 248)).